The primary structure comprises 105 residues: Small ribosomal subunit protein uS10 (105 aa).

Belongs to the universal ribosomal protein uS10 family. As to quaternary structure, part of the 30S ribosomal subunit.

Its function is as follows. Involved in the binding of tRNA to the ribosomes. The sequence is that of Small ribosomal subunit protein uS10 from Maridesulfovibrio salexigens (strain ATCC 14822 / DSM 2638 / NCIMB 8403 / VKM B-1763) (Desulfovibrio salexigens).